The following is a 449-amino-acid chain: Phosphoglucosamine mutase (449 aa).

Ser-104 acts as the Phosphoserine intermediate in catalysis. Residues Ser-104, Asp-243, Asp-245, and Asp-247 each coordinate Mg(2+). Ser-104 is subject to Phosphoserine.

It belongs to the phosphohexose mutase family. Mg(2+) is required as a cofactor. In terms of processing, activated by phosphorylation.

It carries out the reaction alpha-D-glucosamine 1-phosphate = D-glucosamine 6-phosphate. Catalyzes the conversion of glucosamine-6-phosphate to glucosamine-1-phosphate. The polypeptide is Phosphoglucosamine mutase (Xanthomonas oryzae pv. oryzae (strain PXO99A)).